A 191-amino-acid polypeptide reads, in one-letter code: Cytochrome c oxidase assembly protein CtaG (191 aa).

At 1-9 (MSLSPHQKT) the chain is on the cytoplasmic side. A helical; Signal-anchor for type II membrane protein transmembrane segment spans residues 10 to 30 (AGGLVLVVAVMGAASFAAVPF). At 31 to 191 (YNWFCRVTGF…LAAESATDVN (161 aa)) the chain is on the periplasmic side.

The protein belongs to the COX11/CtaG family.

Its subcellular location is the cell inner membrane. Exerts its effect at some terminal stage of cytochrome c oxidase synthesis, probably by being involved in the insertion of the copper B into subunit I. This Cereibacter sphaeroides (strain ATCC 17029 / ATH 2.4.9) (Rhodobacter sphaeroides) protein is Cytochrome c oxidase assembly protein CtaG.